The sequence spans 147 residues: uncharacterized protein (147 aa).

The HTH marR-type domain occupies 1–137; the sequence is MRDNTIGSLI…LYELMTKVHK (137 aa). Positions 53-76 form a DNA-binding region, H-T-H motif; it reads QMELAEKVTVTQGGISRMLTRLEK.

This is an uncharacterized protein from Bacillus cereus (strain ATCC 14579 / DSM 31 / CCUG 7414 / JCM 2152 / NBRC 15305 / NCIMB 9373 / NCTC 2599 / NRRL B-3711).